The sequence spans 201 residues: Large ribosomal subunit protein uL4 (201 aa).

The tract at residues 44–71 is disordered; that stretch reads RAQKTRAEVTGSGKKPWRQKGTGRARSG.

It belongs to the universal ribosomal protein uL4 family. In terms of assembly, part of the 50S ribosomal subunit.

One of the primary rRNA binding proteins, this protein initially binds near the 5'-end of the 23S rRNA. It is important during the early stages of 50S assembly. It makes multiple contacts with different domains of the 23S rRNA in the assembled 50S subunit and ribosome. Its function is as follows. Forms part of the polypeptide exit tunnel. In Enterobacter sp. (strain 638), this protein is Large ribosomal subunit protein uL4.